The chain runs to 241 residues: Hydantoin racemase (241 aa).

It belongs to the HyuE racemase family. Homotetramer.

It carries out the reaction a D-5-monosubstituted hydantoin = a L-5-monosubstituted hydantoin. The catalysed reaction is D-5-benzylhydantoin = L-5-benzylhydantoin. It catalyses the reaction D-5-isobutylhydantoin = L-5-isobutylhydantoin. Inhibited by Cu(2+), Hg(2+), Pb(2+) and Zn(2+). The activity is twofold lower in the presence of Mn(2+), Co(2+) and Ni(2+). The insignificant effect of the metal chelating agent EDTA on the hydantoin racemase activity would indicate that it is not a metalloenzyme. Its function is as follows. May be involved in the asymmetric conversion of racemic 5-substituted hydantoins to the corresponding L-amino acids. Catalyzes the racemization via enolization of D- and L-5-monosubstituted hydantoins. The chain is Hydantoin racemase from Rhizobium meliloti (Ensifer meliloti).